The sequence spans 177 residues: Inorganic pyrophosphatase (177 aa).

Residues lysine 30, arginine 44, and tyrosine 56 each contribute to the substrate site. Positions 66, 71, and 103 each coordinate Mg(2+). Tyrosine 142 lines the substrate pocket.

Belongs to the PPase family. In terms of assembly, homohexamer. Mg(2+) is required as a cofactor.

The protein resides in the cytoplasm. It catalyses the reaction diphosphate + H2O = 2 phosphate + H(+). In terms of biological role, catalyzes the hydrolysis of inorganic pyrophosphate (PPi) forming two phosphate ions. This is Inorganic pyrophosphatase from Agrobacterium fabrum (strain C58 / ATCC 33970) (Agrobacterium tumefaciens (strain C58)).